The chain runs to 887 residues: Alanine--tRNA ligase (887 aa).

The Zn(2+) site is built by H564, H568, C676, and H680.

Belongs to the class-II aminoacyl-tRNA synthetase family. The cofactor is Zn(2+).

It is found in the cytoplasm. It catalyses the reaction tRNA(Ala) + L-alanine + ATP = L-alanyl-tRNA(Ala) + AMP + diphosphate. Catalyzes the attachment of alanine to tRNA(Ala) in a two-step reaction: alanine is first activated by ATP to form Ala-AMP and then transferred to the acceptor end of tRNA(Ala). Also edits incorrectly charged Ser-tRNA(Ala) and Gly-tRNA(Ala) via its editing domain. In Agrobacterium fabrum (strain C58 / ATCC 33970) (Agrobacterium tumefaciens (strain C58)), this protein is Alanine--tRNA ligase.